Here is a 987-residue protein sequence, read N- to C-terminus: Pentatricopeptide repeat-containing protein At1g06710, mitochondrial (987 aa).

A mitochondrion-targeting transit peptide spans 1–42 (MNKTVVRCLLSRSHHPLIHFSTNLSLLHRVFTCSRYLTARFM). 22 PPR repeats span residues 164–198 (TAPV…DKEV), 199–233 (FGEF…RFRP), 234–268 (SRST…NLRM), 269–299 (DGFT…ENFV), 301–335 (DTVF…SCLP), 336–370 (NVVT…GCYP), 371–405 (SPKI…GHMP), 406–446 (GYVV…GVVL), 447–481 (NKIN…GFIP), 482–516 (DTST…GLVA), 517–551 (DVYT…GCTP), 552–586 (NVVT…GCLP), 587–621 (NIVT…KDVP), 638–672 (NVVT…GCEP), 673–707 (NQIV…GFPA), 708–742 (TLYT…SCAP), 743–777 (NVVI…GCQP), 778–812 (NVVT…GVAP), 813–847 (NYVT…HWPT), 881–915 (FLSV…SATL), 918–952 (YSST…GVIP), and 953–987 (EMQS…VCPL).

Belongs to the PPR family. P subfamily.

The protein resides in the mitochondrion. The polypeptide is Pentatricopeptide repeat-containing protein At1g06710, mitochondrial (Arabidopsis thaliana (Mouse-ear cress)).